Here is a 62-residue protein sequence, read N- to C-terminus: uncharacterized protein (62 aa).

The signal sequence occupies residues 1 to 19 (MKLIILLFVVAAFVTLAMG).

This is an uncharacterized protein from Lepidoptera (butterflies and moths).